The chain runs to 371 residues: Chaperone protein DnaJ (371 aa).

Residues 4–68 (DYYKILGVSK…QKRAAYDRFG (65 aa)) form the J domain. Residues 134-212 (GIEKNISFSS…CHGMGRCHKQ (79 aa)) form a CR-type zinc finger. Positions 147, 150, 164, 167, 186, 189, 200, and 203 each coordinate Zn(2+). CXXCXGXG motif repeat units lie at residues 147 to 154 (CDTCHGSG), 164 to 171 (CDACGGVG), 186 to 193 (CHKCKGNG), and 200 to 207 (CKKCHGMG).

The protein belongs to the DnaJ family. As to quaternary structure, homodimer. Zn(2+) is required as a cofactor.

The protein localises to the cytoplasm. In terms of biological role, participates actively in the response to hyperosmotic and heat shock by preventing the aggregation of stress-denatured proteins and by disaggregating proteins, also in an autonomous, DnaK-independent fashion. Unfolded proteins bind initially to DnaJ; upon interaction with the DnaJ-bound protein, DnaK hydrolyzes its bound ATP, resulting in the formation of a stable complex. GrpE releases ADP from DnaK; ATP binding to DnaK triggers the release of the substrate protein, thus completing the reaction cycle. Several rounds of ATP-dependent interactions between DnaJ, DnaK and GrpE are required for fully efficient folding. Also involved, together with DnaK and GrpE, in the DNA replication of plasmids through activation of initiation proteins. The sequence is that of Chaperone protein DnaJ from Rickettsia akari (strain Hartford).